Reading from the N-terminus, the 208-residue chain is Small ribosomal subunit protein uS9c (208 aa).

The transit peptide at M1–A51 directs the protein to the chloroplast. N-acetylthreonine is present on T52. The segment at D185 to R208 is disordered. Basic residues predominate over residues P194 to R208.

Component of the chloroplast small ribosomal subunit (SSU). Mature 70S chloroplast ribosomes of higher plants consist of a small (30S) and a large (50S) subunit. The 30S small subunit contains 1 molecule of ribosomal RNA (16S rRNA) and 24 different proteins. The 50S large subunit contains 3 rRNA molecules (23S, 5S and 4.5S rRNA) and 33 different proteins. uS9c binds directly to 16S ribosomal RNA. uS9c interacts with translation factor pY (PSRP1).

It is found in the plastid. The protein resides in the chloroplast. In terms of biological role, component of the chloroplast ribosome (chloro-ribosome), a dedicated translation machinery responsible for the synthesis of chloroplast genome-encoded proteins, including proteins of the transcription and translation machinery and components of the photosynthetic apparatus. The sequence is that of Small ribosomal subunit protein uS9c (PRPS9) from Spinacia oleracea (Spinach).